Here is a 195-residue protein sequence, read N- to C-terminus: 3-isopropylmalate dehydratase small subunit (195 aa).

Belongs to the LeuD family. LeuD type 1 subfamily. Heterodimer of LeuC and LeuD.

The enzyme catalyses (2R,3S)-3-isopropylmalate = (2S)-2-isopropylmalate. The protein operates within amino-acid biosynthesis; L-leucine biosynthesis; L-leucine from 3-methyl-2-oxobutanoate: step 2/4. Catalyzes the isomerization between 2-isopropylmalate and 3-isopropylmalate, via the formation of 2-isopropylmaleate. The chain is 3-isopropylmalate dehydratase small subunit from Salinispora tropica (strain ATCC BAA-916 / DSM 44818 / JCM 13857 / NBRC 105044 / CNB-440).